The chain runs to 178 residues: UPF0302 protein Bcer98_1244 (178 aa).

The protein belongs to the UPF0302 family.

This is UPF0302 protein Bcer98_1244 from Bacillus cytotoxicus (strain DSM 22905 / CIP 110041 / 391-98 / NVH 391-98).